We begin with the raw amino-acid sequence, 163 residues long: MPSLDVVSTVDMQAMDNAVNNAKRDLGNRYDFKNSKYELELNRKDKAIEIVAEDEFKLKAVIETLIQQCVRFKLDSKCLDIADSHTVSLGAAKTEIKIKDGLTKETASKITKFIKSTKLKLDSAIQGEQIRITGKQIDDLQEIMRLLSEQDFDVPLQYVNMKR.

The protein belongs to the YajQ family.

Its function is as follows. Nucleotide-binding protein. This Dehalococcoides mccartyi (strain CBDB1) protein is Nucleotide-binding protein cbdbA1256.